Reading from the N-terminus, the 226-residue chain is NAD(P)H-quinone oxidoreductase subunit K, chloroplastic (226 aa).

Residues cysteine 43, cysteine 44, cysteine 108, and cysteine 139 each coordinate [4Fe-4S] cluster.

It belongs to the complex I 20 kDa subunit family. In terms of assembly, NDH is composed of at least 16 different subunits, 5 of which are encoded in the nucleus. It depends on [4Fe-4S] cluster as a cofactor.

It localises to the plastid. The protein resides in the chloroplast thylakoid membrane. The catalysed reaction is a plastoquinone + NADH + (n+1) H(+)(in) = a plastoquinol + NAD(+) + n H(+)(out). It catalyses the reaction a plastoquinone + NADPH + (n+1) H(+)(in) = a plastoquinol + NADP(+) + n H(+)(out). In terms of biological role, NDH shuttles electrons from NAD(P)H:plastoquinone, via FMN and iron-sulfur (Fe-S) centers, to quinones in the photosynthetic chain and possibly in a chloroplast respiratory chain. The immediate electron acceptor for the enzyme in this species is believed to be plastoquinone. Couples the redox reaction to proton translocation, and thus conserves the redox energy in a proton gradient. In Lupinus luteus (European yellow lupine), this protein is NAD(P)H-quinone oxidoreductase subunit K, chloroplastic.